Reading from the N-terminus, the 326-residue chain is Protein-ribulosamine 3-kinase, chloroplastic (326 aa).

Residues 1 to 30 (MAVASLSICFSARPHLLLRNFSPRPKFVAM) constitute a chloroplast transit peptide. 125-127 (EFI) contacts ATP. The Proton acceptor role is filled by Asp-230.

The protein belongs to the fructosamine kinase family.

It localises to the plastid. The protein localises to the chloroplast. It carries out the reaction N(6)-D-ribulosyl-L-lysyl-[protein] + ATP = N(6)-(3-O-phospho-D-ribulosyl)-L-lysyl-[protein] + ADP + H(+). The enzyme catalyses N(6)-(D-erythrulosyl)-L-lysyl-[protein] + ATP = N(6)-(3-O-phospho-D-erythrulosyl)-L-lysyl-[protein] + ADP + H(+). Its function is as follows. Initiates a process leading to the deglycation of proteins. Phosphorylates low-molecular-mass and protein-bound erythrulosamines and ribulosamines, but not fructosamines or psicosamines, on the third carbon of the sugar moiety. Protein-bound erythrulosamine 3-phosphates and ribulosamine 3-phosphates are unstable and decompose under physiological conditions. This chain is Protein-ribulosamine 3-kinase, chloroplastic, found in Arabidopsis thaliana (Mouse-ear cress).